Consider the following 150-residue polypeptide: General odorant-binding protein 19d (150 aa).

The first 23 residues, 1–23 (MSHLVHLTVLLLVGILCLGATSA), serve as a signal peptide directing secretion. 3 cysteine pairs are disulfide-bonded: Cys-41–Cys-72, Cys-68–Cys-126, and Cys-116–Cys-135.

This sequence belongs to the PBP/GOBP family. As to expression, expressed in the antenna, mostly on the anterior surface of the third antennal segment. Also detected in the maxillary palps and in cells at the bases of the taste hairs on the proboscis and internal taste organs of the head.

It is found in the secreted. In Drosophila melanogaster (Fruit fly), this protein is General odorant-binding protein 19d (Obp19d).